The chain runs to 389 residues: Probable zinc transporter zip2 (389 aa).

A run of 7 helical transmembrane segments spans residues 6 to 26 (GWILSLSINAFCVFGASGIYL), 48 to 68 (LVTGLATSSGILLYSSWASVM), 88 to 108 (VFQFCAFFFGGIVFYIFNHFL), 267 to 289 (VLVAMSIHNIVEGFTIAYPLYLA), 305 to 325 (SCSLPLGSLIAFLVMEAGGIG), 329 to 349 (FLNFLYGIIFAGTAGMMLILS), and 368 to 388 (HSFICFTIGILFTLFLEIFDS).

This sequence belongs to the ZIP transporter (TC 2.A.5) family.

The protein resides in the endoplasmic reticulum membrane. Probable zinc transporter that may mediate zinc remobilization from the endoplasmic reticulum under zinc limitation. The sequence is that of Probable zinc transporter zip2 (zip2) from Schizosaccharomyces pombe (strain 972 / ATCC 24843) (Fission yeast).